A 709-amino-acid polypeptide reads, in one-letter code: Potassium-transporting ATPase ATP-binding subunit (709 aa).

A run of 4 helical transmembrane segments spans residues 55-75 (VMLVVLVGAVITTLAFLRDLA), 86-106 (GLVAAFLWFTVLFANFAEAMA), 236-256 (IALNILLAGLTIIFLLAVVTL), and 269-289 (VVVLVALLVCLIPTTIGALLS). Residue Asp324 is the 4-aspartylphosphate intermediate of the active site. ATP is bound by residues Asp361, Glu365, 395 to 402 (FTAETRMS), and Lys417. Positions 545 and 549 each coordinate Mg(2+). The next 3 membrane-spanning stretches (helical) occupy residues 615 to 635 (FAIIPAMFVGLYPVLDKLNVM), 643 to 663 (AILSAVIFNALVIVALIPLAL), and 688 to 708 (GLVVPFIGIKLVDLVIVALGV).

Belongs to the cation transport ATPase (P-type) (TC 3.A.3) family. Type IA subfamily. In terms of assembly, the system is composed of three essential subunits: KdpA, KdpB and KdpC.

It is found in the cell membrane. It carries out the reaction K(+)(out) + ATP + H2O = K(+)(in) + ADP + phosphate + H(+). In terms of biological role, part of the high-affinity ATP-driven potassium transport (or Kdp) system, which catalyzes the hydrolysis of ATP coupled with the electrogenic transport of potassium into the cytoplasm. This subunit is responsible for energy coupling to the transport system and for the release of the potassium ions to the cytoplasm. The protein is Potassium-transporting ATPase ATP-binding subunit of Mycobacterium tuberculosis (strain ATCC 25618 / H37Rv).